Here is a 192-residue protein sequence, read N- to C-terminus: Imidazoleglycerol-phosphate dehydratase (192 aa).

This sequence belongs to the imidazoleglycerol-phosphate dehydratase family.

It is found in the cytoplasm. The catalysed reaction is D-erythro-1-(imidazol-4-yl)glycerol 3-phosphate = 3-(imidazol-4-yl)-2-oxopropyl phosphate + H2O. It participates in amino-acid biosynthesis; L-histidine biosynthesis; L-histidine from 5-phospho-alpha-D-ribose 1-diphosphate: step 6/9. This chain is Imidazoleglycerol-phosphate dehydratase, found in Hydrogenobaculum sp. (strain Y04AAS1).